A 322-amino-acid chain; its full sequence is Ribose-phosphate pyrophosphokinase (322 aa).

ATP contacts are provided by residues Asp-43 to Glu-45 and Arg-102 to Gln-103. Mg(2+) is bound by residues His-137 and Asp-177. Residue Lys-201 is part of the active site. Residues Arg-203, Asp-227, and Asp-231–Thr-235 each bind D-ribose 5-phosphate.

It belongs to the ribose-phosphate pyrophosphokinase family. Class I subfamily. Homohexamer. Mg(2+) serves as cofactor.

The protein localises to the cytoplasm. It catalyses the reaction D-ribose 5-phosphate + ATP = 5-phospho-alpha-D-ribose 1-diphosphate + AMP + H(+). It participates in metabolic intermediate biosynthesis; 5-phospho-alpha-D-ribose 1-diphosphate biosynthesis; 5-phospho-alpha-D-ribose 1-diphosphate from D-ribose 5-phosphate (route I): step 1/1. Functionally, involved in the biosynthesis of the central metabolite phospho-alpha-D-ribosyl-1-pyrophosphate (PRPP) via the transfer of pyrophosphoryl group from ATP to 1-hydroxyl of ribose-5-phosphate (Rib-5-P). The protein is Ribose-phosphate pyrophosphokinase of Xylella fastidiosa (strain Temecula1 / ATCC 700964).